The primary structure comprises 128 residues: Iron-sulfur cluster insertion protein ErpA (128 aa).

Iron-sulfur cluster-binding residues include Cys-56, Cys-120, and Cys-122.

It belongs to the HesB/IscA family. In terms of assembly, homodimer. Iron-sulfur cluster is required as a cofactor.

Functionally, required for insertion of 4Fe-4S clusters for at least IspG. The chain is Iron-sulfur cluster insertion protein ErpA from Xanthomonas axonopodis pv. citri (strain 306).